We begin with the raw amino-acid sequence, 383 residues long: Chitinase-3-like protein 1 (383 aa).

The signal sequence occupies residues 1 to 21 (MGLRVAQTGFVALVLLQSCAA). The region spanning 22 to 383 (YKLVCYYTSW…SAIKDVLAAA (362 aa)) is the GH18 domain. A disulfide bridge connects residues C26 and C51. N60 carries N-linked (GlcNAc...) asparagine glycosylation. Chitin is bound by residues 70 to 71 (EW), 97 to 100 (GGWN), Y141, 204 to 207 (LTYD), and R263. An intrachain disulfide couples C300 to C364. Positions 324–338 (QWVGYDDQESVKNKA) are important for AKT1 activation and IL8 production. W352 is a binding site for chitin.

The protein belongs to the glycosyl hydrolase 18 family. Monomer. In terms of tissue distribution, detected in smooth muscle cells in atherosclerotic plaques. Detected in regions of vascular occlusion in the aorta.

The protein resides in the secreted. The protein localises to the extracellular space. It localises to the cytoplasm. Its subcellular location is the perinuclear region. It is found in the endoplasmic reticulum. Functionally, carbohydrate-binding lectin with a preference for chitin. Has no chitinase activity. May play a role in tissue remodeling and in the capacity of cells to respond to and cope with changes in their environment. Plays a role in T-helper cell type 2 (Th2) inflammatory response and IL-13-induced inflammation, regulating allergen sensitization, inflammatory cell apoptosis, dendritic cell accumulation and M2 macrophage differentiation. Facilitates invasion of pathogenic enteric bacteria into colonic mucosa and lymphoid organs. Mediates activation of AKT1 signaling pathway and subsequent IL8 production in colonic epithelial cells. Regulates antibacterial responses in lung by contributing to macrophage bacterial killing, controlling bacterial dissemination and augmenting host tolerance. Also regulates hyperoxia-induced injury, inflammation and epithelial apoptosis in lung. Stimulates migration and adhesion of cultured vascular smooth muscle cells. The chain is Chitinase-3-like protein 1 (CHI3L1) from Sus scrofa (Pig).